The chain runs to 491 residues: Aspartyl/glutamyl-tRNA(Asn/Gln) amidotransferase subunit B (491 aa).

This sequence belongs to the GatB/GatE family. GatB subfamily. As to quaternary structure, heterotrimer of A, B and C subunits.

The catalysed reaction is L-glutamyl-tRNA(Gln) + L-glutamine + ATP + H2O = L-glutaminyl-tRNA(Gln) + L-glutamate + ADP + phosphate + H(+). It carries out the reaction L-aspartyl-tRNA(Asn) + L-glutamine + ATP + H2O = L-asparaginyl-tRNA(Asn) + L-glutamate + ADP + phosphate + 2 H(+). Its function is as follows. Allows the formation of correctly charged Asn-tRNA(Asn) or Gln-tRNA(Gln) through the transamidation of misacylated Asp-tRNA(Asn) or Glu-tRNA(Gln) in organisms which lack either or both of asparaginyl-tRNA or glutaminyl-tRNA synthetases. The reaction takes place in the presence of glutamine and ATP through an activated phospho-Asp-tRNA(Asn) or phospho-Glu-tRNA(Gln). This is Aspartyl/glutamyl-tRNA(Asn/Gln) amidotransferase subunit B from Trichormus variabilis (strain ATCC 29413 / PCC 7937) (Anabaena variabilis).